A 297-amino-acid chain; its full sequence is Tumor necrosis factor receptor superfamily member 27 (297 aa).

The Extracellular portion of the chain corresponds to M1 to T138. TNFR-Cys repeat units follow at residues D2 to C41, A43 to C83, and D85 to C118. 8 disulfides stabilise this stretch: C3–C15, C18–C31, C21–C41, C44–C58, C61–C75, C64–C83, C86–C104, and C107–C118. N-linked (GlcNAc...) asparagine glycosylation occurs at N74. A helical; Signal-anchor for type III membrane protein transmembrane segment spans residues L139 to F159. Residues L160 to P297 are Cytoplasmic-facing. Positions E272 to S281 are enriched in polar residues. The segment at E272–P297 is disordered.

In terms of assembly, associates with TRAF1, TRAF3 and TRAF6.

It localises to the membrane. Receptor for EDA isoform A2, but not for EDA isoform A1. Mediates the activation of the NF-kappa-B and JNK pathways. Activation seems to be mediated by binding to TRAF3 and TRAF6. This chain is Tumor necrosis factor receptor superfamily member 27 (EDA2R), found in Homo sapiens (Human).